Reading from the N-terminus, the 160-residue chain is Serine-protein kinase RsbW (160 aa).

As to quaternary structure, homodimer. In stressed cells, forms a complex with RsbV. The predominant form of this complex has a stoichiometry of 2:2 (one dimer of RsbW is bound by two monomers of RsbV). In unstressed cells, forms a 2:1 complex with sigma-B.

It carries out the reaction L-seryl-[protein] + ATP = O-phospho-L-seryl-[protein] + ADP + H(+). The enzyme catalyses L-threonyl-[protein] + ATP = O-phospho-L-threonyl-[protein] + ADP + H(+). With respect to regulation, the higher affinity of RsbW for RsbV than for sigma-B, rather than a difference in the concentrations of RsbV and sigma-B, is the driving force that is responsible for the switch of RsbW to non-phosphorylated RsbV. The kinase activity of RsbW is directly regulated by changes in the ATP/ADP ratio. Its function is as follows. Negative regulator of sigma-B activity. Phosphorylates and inactivates its specific antagonist protein, RsbV. Upon phosphorylation of RsbV, RsbW is released and binds to sigma-B, thereby blocking its ability to form an RNA polymerase holoenzyme (E-sigma-B). This Bacillus subtilis (strain 168) protein is Serine-protein kinase RsbW (rsbW).